Reading from the N-terminus, the 426-residue chain is Histidine--tRNA ligase (426 aa).

This sequence belongs to the class-II aminoacyl-tRNA synthetase family. Homodimer.

It localises to the cytoplasm. It catalyses the reaction tRNA(His) + L-histidine + ATP = L-histidyl-tRNA(His) + AMP + diphosphate + H(+). In Streptococcus equi subsp. equi (strain 4047), this protein is Histidine--tRNA ligase.